The following is an 89-amino-acid chain: Small ribosomal subunit protein uS15 (89 aa).

The protein belongs to the universal ribosomal protein uS15 family. As to quaternary structure, part of the 30S ribosomal subunit. Forms a bridge to the 50S subunit in the 70S ribosome, contacting the 23S rRNA.

In terms of biological role, one of the primary rRNA binding proteins, it binds directly to 16S rRNA where it helps nucleate assembly of the platform of the 30S subunit by binding and bridging several RNA helices of the 16S rRNA. Functionally, forms an intersubunit bridge (bridge B4) with the 23S rRNA of the 50S subunit in the ribosome. In Syntrophomonas wolfei subsp. wolfei (strain DSM 2245B / Goettingen), this protein is Small ribosomal subunit protein uS15.